A 542-amino-acid chain; its full sequence is Protein phosphatase 1G (542 aa).

Residue G2 is the site of N-myristoyl glycine attachment. R22 bears the Omega-N-methylarginine mark. The region spanning 26 to 502 (PYGFSAMQGW…DNMTCIIICF (477 aa)) is the PPM-type phosphatase domain. Mn(2+)-binding residues include D60 and G61. Disordered regions lie at residues 117-136 (IAGR…DEDD) and 164-325 (CQKV…SDSG). Phosphothreonine is present on T122. Composition is skewed to acidic residues over residues 123-136 (EDED…DEDD) and 259-309 (DSED…DEEM). Residue K380 is modified to N6-acetyllysine. Mn(2+) is bound by residues D438 and D493. Positions 513-542 (ESGKRKLEEALSTEGAEDTGNSDKKKAKRD) are disordered. The residue at position 524 (S524) is a Phosphoserine.

The protein belongs to the PP2C family. Interacts with NOL3; may dephosphorylate NOL3. Mg(2+) is required as a cofactor. Mn(2+) serves as cofactor. Highly expressed in testis. Low level of expression in kidney. Also expressed in a number of tissues undergoing proliferation including embryo, uterus at pregnancy, placenta, and ovaries.

The protein resides in the nucleus. Its subcellular location is the membrane. The catalysed reaction is O-phospho-L-seryl-[protein] + H2O = L-seryl-[protein] + phosphate. The enzyme catalyses O-phospho-L-threonyl-[protein] + H2O = L-threonyl-[protein] + phosphate. Its function is as follows. May be involved in regulation of cell cycle. This chain is Protein phosphatase 1G (Ppm1g), found in Mus musculus (Mouse).